We begin with the raw amino-acid sequence, 279 residues long: uncharacterized protein (279 aa).

This is an uncharacterized protein from Borreliella burgdorferi (strain ATCC 35210 / DSM 4680 / CIP 102532 / B31) (Borrelia burgdorferi).